A 330-amino-acid polypeptide reads, in one-letter code: Protein IN CHLOROPLAST ATPASE BIOGENESIS, chloroplastic (330 aa).

A chloroplast-targeting transit peptide spans 1-35; that stretch reads MGSISMHITPSTALPIRHFRARVSCCSSGHVSFIK.

As to quaternary structure, interacts with ATPC1.

The protein localises to the plastid. Its subcellular location is the chloroplast stroma. Involved in the assembly of the F(1) ATP synthase in chloroplast thylakoid membranes. Functions downstream of the CPN60 chaperones to promote assembly of the catalytically active core of the chloroplast ATP synthase. Assists the assembly of the ATP synthase gamma subunit into the active F(1) core downstream of CPN60-mediated folding, which is critical for the biogenesis of the chloroplast ATP synthase. In Arabidopsis thaliana (Mouse-ear cress), this protein is Protein IN CHLOROPLAST ATPASE BIOGENESIS, chloroplastic.